Here is a 1694-residue protein sequence, read N- to C-terminus: Immunoglobulin A1 protease autotransporter (1694 aa).

The N-terminal stretch at 1–25 (MLNKKFKLNFIALTVAYALTPYTEA) is a signal peptide. Residues 26–332 (ALVRDDVDYQ…NIYKPEFAKT (307 aa)) form the Peptidase S6 domain. The active site involves S288. A disordered region spans residues 991-1403 (VEKRNQTVDT…GSDRSTVALR (413 aa)). Polar residues predominate over residues 997–1021 (TVDTTNITTPNNIQADVPSVPSNNE). Over residues 1037–1047 (TPSETTETVAE) the composition is skewed to low complexity. Residues 1049 to 1061 (SKQESKTVEKNEQ) show a composition bias toward basic and acidic residues. The span at 1082–1095 (KANTQTNEVAQSGS) shows a compositional bias: polar residues. 2 stretches are compositionally biased toward basic and acidic residues: residues 1104-1124 (EIKE…KDEI) and 1142-1154 (APKE…KVEE). Composition is skewed to polar residues over residues 1155–1178 (TQVQ…SPNS) and 1199–1210 (VSKNQTENTTDQ). Positions 1211 to 1226 (PTEREKTAKVETEKTQ) are enriched in basic and acidic residues. 3 stretches are compositionally biased toward polar residues: residues 1227-1247 (EPPQ…TVQP), 1255-1297 (NVPT…TAIT), and 1308-1336 (TETA…NSES). Positions 1352–1370 (ETSAEETTAASTDETTIAD) are enriched in low complexity. A compositionally biased stretch (basic residues) spans 1374-1384 (RSKPNRRSRRS). Residues 1442–1694 (NNEGQYNVWV…TAELKLSFSF (253 aa)) form the Autotransporter domain.

The protein resides in the periplasm. Its subcellular location is the secreted. It is found in the cell surface. It localises to the cell outer membrane. It carries out the reaction Cleavage of immunoglobulin A molecules at certain Pro-|-Xaa bonds in the hinge region. No small molecule substrates are known.. Virulence factor; cleaves host immunoglobulin A producing intact Fc and Fab fragments. In Haemophilus influenzae (strain ATCC 51907 / DSM 11121 / KW20 / Rd), this protein is Immunoglobulin A1 protease autotransporter (iga).